We begin with the raw amino-acid sequence, 96 residues long: Interleukin-8 (96 aa).

The first 22 residues, 1-22 (MTSKLAIALLATFMLSAALCEA), serve as a signal peptide directing secretion. R27 is subject to Citrulline. Disulfide bonds link C34–C61 and C36–C78.

This sequence belongs to the intercrine alpha (chemokine CxC) family. As to quaternary structure, homodimer. Interacts with TNFAIP6 (via Link domain); this interaction interferes with chemokine binding to glycosaminoglycans. Post-translationally, citrullination at Arg-27 prevents proteolysis, and dampens tissue inflammation, it also enhances leukocytosis, possibly through impaired chemokine clearance from the blood circulation.

Its subcellular location is the secreted. Its function is as follows. Chemotactic factor that mediates inflammatory response by attracting neutrophils, basophils, and T-cells to clear pathogens and protect the host from infection. Also plays an important role in neutrophil activation. Released in response to an inflammatory stimulus, exerts its effect by binding to the G-protein-coupled receptors CXCR1 and CXCR2, primarily found in neutrophils, monocytes and endothelial cells. G-protein heterotrimer (alpha, beta, gamma subunits) constitutively binds to CXCR1/CXCR2 receptor and activation by IL8 leads to beta and gamma subunits release from Galpha (GNAI2 in neutrophils) and activation of several downstream signaling pathways including PI3K and MAPK pathways. The chain is Interleukin-8 (CXCL8) from Dasypus novemcinctus (Nine-banded armadillo).